Consider the following 165-residue polypeptide: Large ribosomal subunit protein bL17 (165 aa).

Residues 138–158 (QEKREAQEKAREEKRTARKSD) are compositionally biased toward basic and acidic residues. The segment at 138 to 165 (QEKREAQEKAREEKRTARKSDSVPARKK) is disordered.

Belongs to the bacterial ribosomal protein bL17 family. As to quaternary structure, part of the 50S ribosomal subunit. Contacts protein L32.

The polypeptide is Large ribosomal subunit protein bL17 (Leptospira borgpetersenii serovar Hardjo-bovis (strain JB197)).